We begin with the raw amino-acid sequence, 352 residues long: Secretion system apparatus protein SsaU (352 aa).

The next 4 helical transmembrane spans lie at Leu-34–Glu-54, Leu-89–Ile-109, Leu-144–Phe-164, and Val-176–Val-196.

Belongs to the type III secretion exporter family.

It localises to the cell membrane. Part of a type III secretion system. The protein is Secretion system apparatus protein SsaU (ssaU) of Salmonella typhimurium (strain LT2 / SGSC1412 / ATCC 700720).